A 795-amino-acid polypeptide reads, in one-letter code: Delta-1-pyrroline-5-carboxylate synthase (795 aa).

Positions 1 to 361 (MLSQVYRCGF…FFSEVKPAGP (361 aa)) are glutamate 5-kinase. The substrate site is built by serine 117, aspartate 223, and asparagine 246. ATP is bound by residues 266–267 (SD) and 305–311 (MGGMEAK). Lysine 311, lysine 347, and lysine 550 each carry N6-succinyllysine. The tract at residues 362–795 (TVEQQGEMAR…NLPIPQRNTN (434 aa)) is gamma-glutamyl phosphate reductase.

This sequence in the N-terminal section; belongs to the glutamate 5-kinase family. It in the C-terminal section; belongs to the gamma-glutamyl phosphate reductase family. As to quaternary structure, can form homodimers/multimers.

The protein resides in the mitochondrion. It is found in the mitochondrion matrix. The enzyme catalyses L-glutamate + ATP = L-glutamyl 5-phosphate + ADP. The catalysed reaction is L-glutamate 5-semialdehyde + phosphate + NADP(+) = L-glutamyl 5-phosphate + NADPH + H(+). The protein operates within amino-acid biosynthesis; L-proline biosynthesis; L-glutamate 5-semialdehyde from L-glutamate: step 1/2. It functions in the pathway amino-acid biosynthesis; L-proline biosynthesis; L-glutamate 5-semialdehyde from L-glutamate: step 2/2. Its activity is regulated as follows. Isoform Short: Inhibited by L-ornithine with a Ki of approximately 0.25 mm. Isoform Long: Insensitive to ornithine inhibition. This is due to the two amino acid insert which abolishes feedback inhibition of P5CS activity by L-ornithine. Its function is as follows. Bifunctional enzyme that converts glutamate to glutamate 5-semialdehyde, an intermediate in the biosynthesis of proline, ornithine and arginine. In Homo sapiens (Human), this protein is Delta-1-pyrroline-5-carboxylate synthase (ALDH18A1).